The sequence spans 433 residues: Glutamate-1-semialdehyde 2,1-aminomutase (433 aa).

K273 is subject to N6-(pyridoxal phosphate)lysine.

This sequence belongs to the class-III pyridoxal-phosphate-dependent aminotransferase family. HemL subfamily. As to quaternary structure, homodimer. It depends on pyridoxal 5'-phosphate as a cofactor.

It is found in the cytoplasm. It carries out the reaction (S)-4-amino-5-oxopentanoate = 5-aminolevulinate. It participates in porphyrin-containing compound metabolism; protoporphyrin-IX biosynthesis; 5-aminolevulinate from L-glutamyl-tRNA(Glu): step 2/2. It functions in the pathway porphyrin-containing compound metabolism; chlorophyll biosynthesis. This Crocosphaera subtropica (strain ATCC 51142 / BH68) (Cyanothece sp. (strain ATCC 51142)) protein is Glutamate-1-semialdehyde 2,1-aminomutase.